The sequence spans 449 residues: Cyclin-B1-1 (449 aa).

2 disordered regions span residues 1 to 34 (MATRSQNVAAAPQPPQNRGNVAALGKQKAVVAGR) and 90 to 143 (AVAP…SVRK). Low complexity-rich tracts occupy residues 90–102 (AVAPAAVARPAQR) and 121–134 (EISSDSDQSMRQQS).

This sequence belongs to the cyclin family. Cyclin AB subfamily.

This chain is Cyclin-B1-1 (CYCB1-1), found in Oryza sativa subsp. japonica (Rice).